A 913-amino-acid chain; its full sequence is DNA mismatch repair protein MutS (913 aa).

An ATP-binding site is contributed by 720–727 (GPNASGKS).

It belongs to the DNA mismatch repair MutS family.

In terms of biological role, this protein is involved in the repair of mismatches in DNA. It is possible that it carries out the mismatch recognition step. This protein has a weak ATPase activity. In Prochlorococcus marinus (strain MIT 9312), this protein is DNA mismatch repair protein MutS.